The following is a 210-amino-acid chain: Peptidyl-tRNA hydrolase (210 aa).

Y15 serves as a coordination point for tRNA. The active-site Proton acceptor is the H20. Positions 66, 68, and 114 each coordinate tRNA. The segment at 186-210 (IHTSKPPRPKPPRREPGDGGTPATA) is disordered.

Belongs to the PTH family. In terms of assembly, monomer.

The protein resides in the cytoplasm. It carries out the reaction an N-acyl-L-alpha-aminoacyl-tRNA + H2O = an N-acyl-L-amino acid + a tRNA + H(+). In terms of biological role, hydrolyzes ribosome-free peptidyl-tRNAs (with 1 or more amino acids incorporated), which drop off the ribosome during protein synthesis, or as a result of ribosome stalling. Functionally, catalyzes the release of premature peptidyl moieties from peptidyl-tRNA molecules trapped in stalled 50S ribosomal subunits, and thus maintains levels of free tRNAs and 50S ribosomes. In Variovorax paradoxus (strain S110), this protein is Peptidyl-tRNA hydrolase.